A 341-amino-acid polypeptide reads, in one-letter code: Hyaluronidase A (341 aa).

N-linked (GlcNAc...) asparagine glycosylation is found at N3, N68, and N83. 2 disulfides stabilise this stretch: C23/C311 and C189/C201.

Belongs to the glycosyl hydrolase 56 family. In terms of tissue distribution, expressed by the venom gland.

It is found in the secreted. The catalysed reaction is Random hydrolysis of (1-&gt;4)-linkages between N-acetyl-beta-D-glucosamine and D-glucuronate residues in hyaluronate.. In terms of biological role, may hydrolyze high molecular weight hyaluronic acid to produce small oligosaccharides. This Vespa velutina (Asian yellow-legged hornet) protein is Hyaluronidase A.